The chain runs to 243 residues: MTTLFISDLHLTPSRTDITECFVQFMRNEAVNAEALYVLGDLFEFWIGDEDCTPFAERIRNEFKALTTSGVPVYFIQGNRDFLLGQRFCRETGITLLDDVCTIDLYGEKVVILHGDTLCIDDLKYQEFRKTVHQRWLQWIFKRIPWFIKKRIVAKVQSGVRDDKQHKSLEIMDVNQQEVAQVMSQFCVKLMIHGHTHRPNIHHFEHDNLPLTRIVLGDWYSQGSVLKVTADGYSLEQRPFFTE.

5 residues coordinate Mn(2+): Asp8, His10, Asp41, Asn79, and His114. Residue 79 to 80 coordinates substrate; the sequence is NR. Asp122, Lys164, Lys167, and His195 together coordinate substrate. Residues His195 and His197 each coordinate Mn(2+).

The protein belongs to the LpxH family. The cofactor is Mn(2+).

The protein resides in the cell inner membrane. The catalysed reaction is UDP-2-N,3-O-bis[(3R)-3-hydroxytetradecanoyl]-alpha-D-glucosamine + H2O = 2-N,3-O-bis[(3R)-3-hydroxytetradecanoyl]-alpha-D-glucosaminyl 1-phosphate + UMP + 2 H(+). Its pathway is glycolipid biosynthesis; lipid IV(A) biosynthesis; lipid IV(A) from (3R)-3-hydroxytetradecanoyl-[acyl-carrier-protein] and UDP-N-acetyl-alpha-D-glucosamine: step 4/6. In terms of biological role, hydrolyzes the pyrophosphate bond of UDP-2,3-diacylglucosamine to yield 2,3-diacylglucosamine 1-phosphate (lipid X) and UMP by catalyzing the attack of water at the alpha-P atom. Involved in the biosynthesis of lipid A, a phosphorylated glycolipid that anchors the lipopolysaccharide to the outer membrane of the cell. The sequence is that of UDP-2,3-diacylglucosamine hydrolase from Vibrio vulnificus (strain CMCP6).